A 129-amino-acid polypeptide reads, in one-letter code: Fluoride-specific ion channel FluC (129 aa).

4 consecutive transmembrane segments (helical) span residues 1–21 (MLMK…LGSA), 35–55 (GGLP…IGFI), 71–91 (LFLV…IFEN), and 105–125 (AYLA…TFFA). Na(+) is bound by residues Gly79 and Thr82.

Belongs to the fluoride channel Fluc/FEX (TC 1.A.43) family.

It is found in the cell inner membrane. The catalysed reaction is fluoride(in) = fluoride(out). Na(+) is not transported, but it plays an essential structural role and its presence is essential for fluoride channel function. Functionally, fluoride-specific ion channel. Important for reducing fluoride concentration in the cell, thus reducing its toxicity. This chain is Fluoride-specific ion channel FluC, found in Chlorobium phaeobacteroides (strain DSM 266 / SMG 266 / 2430).